The primary structure comprises 532 residues: Light-independent protochlorophyllide reductase subunit B (532 aa).

Asp36 is a binding site for [4Fe-4S] cluster. Asp292 acts as the Proton donor in catalysis. Gly428–Leu429 serves as a coordination point for substrate. The interval Glu445 to Asp486 is disordered.

The protein belongs to the ChlB/BchB/BchZ family. Protochlorophyllide reductase is composed of three subunits; BchL, BchN and BchB. Forms a heterotetramer of two BchB and two BchN subunits. Requires [4Fe-4S] cluster as cofactor.

The enzyme catalyses chlorophyllide a + oxidized 2[4Fe-4S]-[ferredoxin] + 2 ADP + 2 phosphate = protochlorophyllide a + reduced 2[4Fe-4S]-[ferredoxin] + 2 ATP + 2 H2O. Its pathway is porphyrin-containing compound metabolism; bacteriochlorophyll biosynthesis (light-independent). Component of the dark-operative protochlorophyllide reductase (DPOR) that uses Mg-ATP and reduced ferredoxin to reduce ring D of protochlorophyllide (Pchlide) to form chlorophyllide a (Chlide). This reaction is light-independent. The NB-protein (BchN-BchB) is the catalytic component of the complex. The protein is Light-independent protochlorophyllide reductase subunit B of Chlorobium phaeobacteroides (strain BS1).